Here is a 219-residue protein sequence, read N- to C-terminus: ATP synthase protein MI25 (219 aa).

Residues 29 to 49 traverse the membrane as a helical segment; that stretch reads ISIYNEEMIVARCFIGFLILS.

Belongs to the ATPase protein MI25 family. In terms of assembly, F-type ATPases have 2 components, CF(1) - the catalytic core - and CF(0) - the membrane proton channel. CF(1) has five subunits: alpha(3), beta(3), gamma(1), delta(1), epsilon(1). CF(0) has three main subunits: a, b and c.

It is found in the mitochondrion membrane. This is one of the chains of the nonenzymatic component (CF(0) subunit) of the mitochondrial ATPase complex. The chain is ATP synthase protein MI25 from Zea mays (Maize).